We begin with the raw amino-acid sequence, 457 residues long: Siroheme synthase (457 aa).

A precorrin-2 dehydrogenase /sirohydrochlorin ferrochelatase region spans residues M1–T204. NAD(+) is bound by residues D22 to V23 and L43 to N44. Position 128 is a phosphoserine (S128). The uroporphyrinogen-III C-methyltransferase stretch occupies residues G216–H457. Residue P225 participates in S-adenosyl-L-methionine binding. Residue D248 is the Proton acceptor of the active site. The active-site Proton donor is the K270. S-adenosyl-L-methionine contacts are provided by residues G301–D303, I306, T331–A332, M382, and G411.

The protein in the N-terminal section; belongs to the precorrin-2 dehydrogenase / sirohydrochlorin ferrochelatase family. In the C-terminal section; belongs to the precorrin methyltransferase family.

The catalysed reaction is uroporphyrinogen III + 2 S-adenosyl-L-methionine = precorrin-2 + 2 S-adenosyl-L-homocysteine + H(+). It carries out the reaction precorrin-2 + NAD(+) = sirohydrochlorin + NADH + 2 H(+). It catalyses the reaction siroheme + 2 H(+) = sirohydrochlorin + Fe(2+). It participates in cofactor biosynthesis; adenosylcobalamin biosynthesis; precorrin-2 from uroporphyrinogen III: step 1/1. It functions in the pathway cofactor biosynthesis; adenosylcobalamin biosynthesis; sirohydrochlorin from precorrin-2: step 1/1. The protein operates within porphyrin-containing compound metabolism; siroheme biosynthesis; precorrin-2 from uroporphyrinogen III: step 1/1. Its pathway is porphyrin-containing compound metabolism; siroheme biosynthesis; siroheme from sirohydrochlorin: step 1/1. It participates in porphyrin-containing compound metabolism; siroheme biosynthesis; sirohydrochlorin from precorrin-2: step 1/1. Its function is as follows. Multifunctional enzyme that catalyzes the SAM-dependent methylations of uroporphyrinogen III at position C-2 and C-7 to form precorrin-2 via precorrin-1. Then it catalyzes the NAD-dependent ring dehydrogenation of precorrin-2 to yield sirohydrochlorin. Finally, it catalyzes the ferrochelation of sirohydrochlorin to yield siroheme. The protein is Siroheme synthase of Salmonella paratyphi A (strain ATCC 9150 / SARB42).